Reading from the N-terminus, the 457-residue chain is Peptidyl-prolyl cis-trans isomerase FKBP5 (457 aa).

Met1 is modified (N-acetylmethionine). A disordered region spans residues 1–26 (MTTDEGAKNSGESPTATVAEQGEDIT). Ser13 is modified (phosphoserine). Position 28 is an N6-acetyllysine (Lys28). In terms of domain architecture, PPIase FKBP-type 1 spans 50–138 (GDKVYVHYKG…FFEIELLDFK (89 aa)). N6-acetyllysine is present on Lys155. The 87-residue stretch at 165–251 (GATVEIHLEG…IYEVTLKSFE (87 aa)) folds into the PPIase FKBP-type 2 domain. TPR repeat units lie at residues 268 to 301 (AAIV…LEME), 317 to 350 (LAAF…DSAN), and 351 to 384 (EKGL…NPQN). The interval 421 to 457 (AKEEANKAMGKKTSEGVTNEKGTDSSAVEEEKAEGHV) is disordered. At Ser445 the chain carries Phosphoserine.

In terms of assembly, part of a heteromultimeric cytoplasmic complex with HSP90AA1, HSPA1A/HSPA1B and steroid receptors. Upon ligand binding dissociates from the complex and FKBP4 takes its place. Interacts with functionally mature heterooligomeric progesterone receptor complexes along with HSP90 and TEBP. Interacts with NR3C1. Interacts with Akt/AKT1 and PHLPP1; enhancing dephosphorylation and subsequent activation of Akt/AKT1. Interacts with IFI44L; this interaction modulates the kinase activity of IKBKB and IKBKE. Interacts with IKBKB and IKBKE. In terms of processing, acetylation impairs ability to promote interaction between Akt/AKT1 and PHLPP1. Deacetylation by SIRT7 promotes interaction between Akt/AKT1 and PHLPP1, leading to suppress Akt/AKT1 activation. Post-translationally, ubiquitinated, leading to degradation in a proteasome-dependent manner. Deubiquitinated by USP49, leading to stabilization.

The protein resides in the cytoplasm. The protein localises to the nucleus. It catalyses the reaction [protein]-peptidylproline (omega=180) = [protein]-peptidylproline (omega=0). With respect to regulation, inhibited by both FK506 and rapamycin. Its function is as follows. Immunophilin protein with PPIase and co-chaperone activities. Component of unligated steroid receptors heterocomplexes through interaction with heat-shock protein 90 (HSP90). Plays a role in the intracellular trafficking of heterooligomeric forms of steroid hormone receptors maintaining the complex into the cytoplasm when unliganded. Acts as a regulator of Akt/AKT1 activity by promoting the interaction between Akt/AKT1 and PHLPP1, thereby enhancing dephosphorylation and subsequent activation of Akt/AKT1. Interacts with IKBKE and IKBKB which facilitates IKK complex assembly leading to increased IKBKE and IKBKB kinase activity, NF-kappaB activation, and IFN production. This Chlorocebus aethiops (Green monkey) protein is Peptidyl-prolyl cis-trans isomerase FKBP5 (FKBP5).